The chain runs to 211 residues: Thiamine-phosphate synthase (211 aa).

4-amino-2-methyl-5-(diphosphooxymethyl)pyrimidine is bound by residues 43–47 (QLRDK) and Asn75. Mg(2+) contacts are provided by Asp76 and Asp95. Ser114 provides a ligand contact to 4-amino-2-methyl-5-(diphosphooxymethyl)pyrimidine. Position 140–142 (140–142 (TAS)) interacts with 2-[(2R,5Z)-2-carboxy-4-methylthiazol-5(2H)-ylidene]ethyl phosphate. Residue Lys143 participates in 4-amino-2-methyl-5-(diphosphooxymethyl)pyrimidine binding. Residues Gly170 and 190-191 (IS) each bind 2-[(2R,5Z)-2-carboxy-4-methylthiazol-5(2H)-ylidene]ethyl phosphate.

Belongs to the thiamine-phosphate synthase family. It depends on Mg(2+) as a cofactor.

It catalyses the reaction 2-[(2R,5Z)-2-carboxy-4-methylthiazol-5(2H)-ylidene]ethyl phosphate + 4-amino-2-methyl-5-(diphosphooxymethyl)pyrimidine + 2 H(+) = thiamine phosphate + CO2 + diphosphate. It carries out the reaction 2-(2-carboxy-4-methylthiazol-5-yl)ethyl phosphate + 4-amino-2-methyl-5-(diphosphooxymethyl)pyrimidine + 2 H(+) = thiamine phosphate + CO2 + diphosphate. The enzyme catalyses 4-methyl-5-(2-phosphooxyethyl)-thiazole + 4-amino-2-methyl-5-(diphosphooxymethyl)pyrimidine + H(+) = thiamine phosphate + diphosphate. It functions in the pathway cofactor biosynthesis; thiamine diphosphate biosynthesis; thiamine phosphate from 4-amino-2-methyl-5-diphosphomethylpyrimidine and 4-methyl-5-(2-phosphoethyl)-thiazole: step 1/1. In terms of biological role, condenses 4-methyl-5-(beta-hydroxyethyl)thiazole monophosphate (THZ-P) and 2-methyl-4-amino-5-hydroxymethyl pyrimidine pyrophosphate (HMP-PP) to form thiamine monophosphate (TMP). The chain is Thiamine-phosphate synthase from Coprothermobacter proteolyticus (strain ATCC 35245 / DSM 5265 / OCM 4 / BT).